Reading from the N-terminus, the 618-residue chain is Serine--tRNA ligase, cytoplasmic (618 aa).

417–419 is a binding site for L-serine; the sequence is TSE. An ATP-binding site is contributed by 448–450; sequence RTE. Residue glutamate 472 coordinates L-serine. ATP is bound at residue 536 to 539; sequence EVSS. Serine 570 contributes to the L-serine binding site.

It belongs to the class-II aminoacyl-tRNA synthetase family. Type-1 seryl-tRNA synthetase subfamily. In terms of assembly, homodimer. The tRNA molecule binds across the dimer.

The protein resides in the cytoplasm. The catalysed reaction is tRNA(Ser) + L-serine + ATP = L-seryl-tRNA(Ser) + AMP + diphosphate + H(+). It catalyses the reaction tRNA(Sec) + L-serine + ATP = L-seryl-tRNA(Sec) + AMP + diphosphate + H(+). The protein operates within aminoacyl-tRNA biosynthesis; selenocysteinyl-tRNA(Sec) biosynthesis; L-seryl-tRNA(Sec) from L-serine and tRNA(Sec): step 1/1. In terms of biological role, catalyzes the attachment of serine to tRNA(Ser). Is also able to aminoacylate tRNA(Sec) with serine, to form the misacylated tRNA L-seryl-tRNA(Sec), which will be further converted into selenocysteinyl-tRNA(Sec). This is Serine--tRNA ligase, cytoplasmic from Plasmodium falciparum (isolate 3D7).